Consider the following 301-residue polypeptide: Probable alpha-L-glutamate ligase 2 (301 aa).

The ATP-grasp domain maps to 104–287 (LQLLSRKGIG…VAEPIVEYIE (184 aa)). Residues lysine 141, 178–179 (EY), aspartate 187, and 211–213 (RSN) contribute to the ATP site. Residues aspartate 248, glutamate 260, and asparagine 262 each coordinate Mg(2+). Mn(2+)-binding residues include aspartate 248, glutamate 260, and asparagine 262.

The protein belongs to the RimK family. Mg(2+) serves as cofactor. The cofactor is Mn(2+).

This Shewanella amazonensis (strain ATCC BAA-1098 / SB2B) protein is Probable alpha-L-glutamate ligase 2.